Reading from the N-terminus, the 492-residue chain is NAD(P)H-quinone oxidoreductase subunit 2 A, chloroplastic (492 aa).

Transmembrane regions (helical) follow at residues 6-26 (LLLFDGSLIFPECILIFGLIL), 39-59 (ISWFYFISSTSLVMSITALLF), 81-101 (IFQFLILLCSTLCIPLSVEYI), 106-126 (MAITEFLLFILTTTLGGMFLC), 131-151 (LITIFVALECFSLCSYLLSGY), 165-185 (YLLMGGASSSILVHGFSWLYG), 209-229 (PGILIALLFITVGIGFKLSPA), 277-297 (WHLLLEILAILSMILGNLIAI), 305-325 (MLAYSSIGQIGYVIIGIIVGD), 336-356 (YMLFYISMNLGTFACIVSFGL), 377-397 (ALSLALCLLSLGGLPPLAGFF), 400-420 (LHLFWCGWQAGLYFLVSIGLL), and 464-484 (FSMIVCVIASTIPGISMNPII).

The protein belongs to the complex I subunit 2 family. In terms of assembly, NDH is composed of at least 16 different subunits, 5 of which are encoded in the nucleus.

It is found in the plastid. Its subcellular location is the chloroplast thylakoid membrane. It carries out the reaction a plastoquinone + NADH + (n+1) H(+)(in) = a plastoquinol + NAD(+) + n H(+)(out). It catalyses the reaction a plastoquinone + NADPH + (n+1) H(+)(in) = a plastoquinol + NADP(+) + n H(+)(out). Its function is as follows. NDH shuttles electrons from NAD(P)H:plastoquinone, via FMN and iron-sulfur (Fe-S) centers, to quinones in the photosynthetic chain and possibly in a chloroplast respiratory chain. The immediate electron acceptor for the enzyme in this species is believed to be plastoquinone. Couples the redox reaction to proton translocation, and thus conserves the redox energy in a proton gradient. This chain is NAD(P)H-quinone oxidoreductase subunit 2 A, chloroplastic, found in Phaseolus vulgaris (Kidney bean).